Consider the following 415-residue polypeptide: 3-isopropylmalate dehydratase large subunit (415 aa).

Residues cysteine 295, cysteine 353, and cysteine 356 each contribute to the [4Fe-4S] cluster site.

Belongs to the aconitase/IPM isomerase family. LeuC type 2 subfamily. In terms of assembly, heterodimer of LeuC and LeuD. It depends on [4Fe-4S] cluster as a cofactor.

The enzyme catalyses (2R,3S)-3-isopropylmalate = (2S)-2-isopropylmalate. It participates in amino-acid biosynthesis; L-leucine biosynthesis; L-leucine from 3-methyl-2-oxobutanoate: step 2/4. Its function is as follows. Catalyzes the isomerization between 2-isopropylmalate and 3-isopropylmalate, via the formation of 2-isopropylmaleate. This Pyrobaculum arsenaticum (strain DSM 13514 / JCM 11321 / PZ6) protein is 3-isopropylmalate dehydratase large subunit.